Consider the following 177-residue polypeptide: FCS-Like Zinc finger 1 (177 aa).

The segment covering 22-46 (SLSEMEAGFSGNNNNSNNHGNPQNG) has biased composition (low complexity). Disordered stretches follow at residues 22 to 49 (SLSE…GVVS) and 134 to 177 (ERDE…VAAA). An FLZ-type zinc finger spans residues 96–140 (HFLDSCFLCKKPLGDNRDIYMYRGDTPFCSEECRQEQIERDEAKE). 2 stretches are compositionally biased toward basic and acidic residues: residues 134–143 (ERDEAKEKKQ) and 154–168 (RRKE…RDYA).

Belongs to the FLZ family. In terms of assembly, interacts with KIN10 and KIN11 via its FLZ-type zinc finger domain. Interacts with KINB1, KINB2 and KINB3 via its N-terminal part. Interacts with DSP3 and BBX21 via its FLZ-type zinc finger domain. Forms heterodimer with FLZ7 and FLZ15 in vitro.

It is found in the nucleus. It localises to the cytoplasm. Its function is as follows. May act as an adapter to facilitate the interaction of SnRK1 complex with effector proteins, conferring tissue- and stimulus-type specific differences in the SnRK1 regulation pathway. The polypeptide is FCS-Like Zinc finger 1 (Arabidopsis thaliana (Mouse-ear cress)).